The following is an 891-amino-acid chain: Targeting protein for Xklp2 homolog (891 aa).

A compositionally biased stretch (basic and acidic residues) spans 42–54 (HENGVPLTFDDKA). 5 disordered regions span residues 42–310 (HENG…KSCP), 418–454 (NLRK…SFSG), 472–518 (HTKT…NRHR), 723–746 (CSGV…AEKG), and 789–891 (STKP…SHTS). Polar residues predominate over residues 108-124 (DDVSSAESETCEMSTDS). The span at 141–154 (DDEATVQESSDAEE) shows a compositional bias: acidic residues. The segment covering 155–173 (TQTLPSSCVDSSTAEMSTD) has biased composition (polar residues). Positions 236-246 (PTRKSPRLHSR) are enriched in basic residues. Residues 442 to 454 (DNRKRTHEESFSG) show a composition bias toward basic and acidic residues. Residues 791 to 802 (KPMTDISNFSLN) are compositionally biased toward polar residues. Basic and acidic residues-rich tracts occupy residues 803-822 (TERR…ERQL) and 831-852 (REAE…DSIH).

It belongs to the TPX2 family. Detectable in immature oocytes.

Its subcellular location is the nucleus. The protein resides in the cytoplasm. The protein localises to the cytoskeleton. It is found in the spindle. Functionally, spindle assembly factor. Required for normal assembly of mitotic spindles. The sequence is that of Targeting protein for Xklp2 homolog from Patiria pectinifera (Starfish).